Reading from the N-terminus, the 303-residue chain is 4-diphosphocytidyl-2-C-methyl-D-erythritol kinase (303 aa).

Lysine 21 is a catalytic residue. 106–116 provides a ligand contact to ATP; that stretch reads PVAAGIGGGSA. Residue aspartate 148 is part of the active site.

This sequence belongs to the GHMP kinase family. IspE subfamily.

It carries out the reaction 4-CDP-2-C-methyl-D-erythritol + ATP = 4-CDP-2-C-methyl-D-erythritol 2-phosphate + ADP + H(+). Its pathway is isoprenoid biosynthesis; isopentenyl diphosphate biosynthesis via DXP pathway; isopentenyl diphosphate from 1-deoxy-D-xylulose 5-phosphate: step 3/6. Catalyzes the phosphorylation of the position 2 hydroxy group of 4-diphosphocytidyl-2C-methyl-D-erythritol. The protein is 4-diphosphocytidyl-2-C-methyl-D-erythritol kinase of Nitrobacter hamburgensis (strain DSM 10229 / NCIMB 13809 / X14).